A 347-amino-acid chain; its full sequence is Protein RecA (347 aa).

Position 65 to 72 (65 to 72) interacts with ATP; it reads GPESSGKT. A disordered region spans residues 328-347; sequence SPAQPEAPAAGEKPEQEEEF.

It belongs to the RecA family.

It is found in the cytoplasm. Its function is as follows. Can catalyze the hydrolysis of ATP in the presence of single-stranded DNA, the ATP-dependent uptake of single-stranded DNA by duplex DNA, and the ATP-dependent hybridization of homologous single-stranded DNAs. It interacts with LexA causing its activation and leading to its autocatalytic cleavage. The sequence is that of Protein RecA from Vibrio parahaemolyticus serotype O3:K6 (strain RIMD 2210633).